The primary structure comprises 208 residues: Imidazoleglycerol-phosphate dehydratase (208 aa).

Belongs to the imidazoleglycerol-phosphate dehydratase family.

It localises to the cytoplasm. The catalysed reaction is D-erythro-1-(imidazol-4-yl)glycerol 3-phosphate = 3-(imidazol-4-yl)-2-oxopropyl phosphate + H2O. The protein operates within amino-acid biosynthesis; L-histidine biosynthesis; L-histidine from 5-phospho-alpha-D-ribose 1-diphosphate: step 6/9. The protein is Imidazoleglycerol-phosphate dehydratase of Anaeromyxobacter dehalogenans (strain 2CP-1 / ATCC BAA-258).